Reading from the N-terminus, the 396-residue chain is NADH-quinone oxidoreductase subunit D 1 (396 aa).

It belongs to the complex I 49 kDa subunit family. NDH-1 is composed of 14 different subunits. Subunits NuoB, C, D, E, F, and G constitute the peripheral sector of the complex.

The protein resides in the cell inner membrane. It catalyses the reaction a quinone + NADH + 5 H(+)(in) = a quinol + NAD(+) + 4 H(+)(out). Its function is as follows. NDH-1 shuttles electrons from NADH, via FMN and iron-sulfur (Fe-S) centers, to quinones in the respiratory chain. The immediate electron acceptor for the enzyme in this species is believed to be ubiquinone. Couples the redox reaction to proton translocation (for every two electrons transferred, four hydrogen ions are translocated across the cytoplasmic membrane), and thus conserves the redox energy in a proton gradient. In Sinorhizobium medicae (strain WSM419) (Ensifer medicae), this protein is NADH-quinone oxidoreductase subunit D 1.